A 180-amino-acid chain; its full sequence is Ribonuclease M5 (180 aa).

Residues 5 to 90 (KQIIIVEGKT…NAFIKKDDIS (86 aa)) form the Toprim domain. The Mg(2+) site is built by Glu11, Asp59, and Asp61.

The protein belongs to the ribonuclease M5 family. Mg(2+) is required as a cofactor.

The protein localises to the cytoplasm. It carries out the reaction Endonucleolytic cleavage of RNA, removing 21 and 42 nucleotides, respectively, from the 5'- and 3'-termini of a 5S-rRNA precursor.. Its function is as follows. Required for correct processing of both the 5' and 3' ends of 5S rRNA precursor. Cleaves both sides of a double-stranded region yielding mature 5S rRNA in one step. The sequence is that of Ribonuclease M5 from Mycoplasma capricolum subsp. capricolum (strain California kid / ATCC 27343 / NCTC 10154).